Reading from the N-terminus, the 101-residue chain is Small ribosomal subunit protein uS10 (101 aa).

It belongs to the universal ribosomal protein uS10 family. In terms of assembly, part of the 30S ribosomal subunit.

Involved in the binding of tRNA to the ribosomes. In Mycobacterium avium (strain 104), this protein is Small ribosomal subunit protein uS10.